The primary structure comprises 322 residues: 1-aminocyclopropane-1-carboxylate oxidase 1 (322 aa).

Residues Pro-159–Pro-259 enclose the Fe2OG dioxygenase domain. 3 residues coordinate Fe cation: His-183, Asp-185, and His-240.

The protein belongs to the iron/ascorbate-dependent oxidoreductase family. Fe cation is required as a cofactor.

The enzyme catalyses 1-aminocyclopropane-1-carboxylate + L-ascorbate + O2 = ethene + L-dehydroascorbate + hydrogen cyanide + CO2 + 2 H2O. The protein operates within alkene biosynthesis; ethylene biosynthesis via S-adenosyl-L-methionine; ethylene from S-adenosyl-L-methionine: step 2/2. In Oryza sativa subsp. japonica (Rice), this protein is 1-aminocyclopropane-1-carboxylate oxidase 1 (ACO1).